A 162-amino-acid chain; its full sequence is Putative pre-16S rRNA nuclease (162 aa).

It belongs to the YqgF nuclease family.

It is found in the cytoplasm. In terms of biological role, could be a nuclease involved in processing of the 5'-end of pre-16S rRNA. In Brucella melitensis biotype 2 (strain ATCC 23457), this protein is Putative pre-16S rRNA nuclease.